The sequence spans 277 residues: MQDLRLMLLLFGVITIIVLFLHGVWARRKERSALFYDQKTKDQNQKEDDVLLQILDEEGVGEVKILKKAPPNVEKNAFDKAHHKKIPSQTKYQALKFDSSVACVTASSFAQISETETQLQKKSDDLSHQSKETHHPSIQKEQKVLVLHVAAHSSRNFSGETLLKSILNSHFQFGDMNIFHRYLTLTGERITLFSLANMVKPGFFDLKKMAHFSTPGISIFMTLPCYGHASENFKLMLQSAQKIADELGGLVLDDQRQMITPQKLEDYNALIRSTPHL.

The Periplasmic portion of the chain corresponds to 1-5 (MQDLR). A helical membrane pass occupies residues 6–26 (LMLLLFGVITIIVLFLHGVWA). The Cytoplasmic segment spans residues 27–277 (RRKERSALFY…NALIRSTPHL (251 aa)). A disordered region spans residues 120 to 139 (QKKSDDLSHQSKETHHPSIQ).

The protein belongs to the ZipA family. In terms of assembly, interacts with FtsZ via their C-terminal domains.

The protein resides in the cell inner membrane. Its function is as follows. Essential cell division protein that stabilizes the FtsZ protofilaments by cross-linking them and that serves as a cytoplasmic membrane anchor for the Z ring. Also required for the recruitment to the septal ring of downstream cell division proteins. The chain is Cell division protein ZipA from Hamiltonella defensa subsp. Acyrthosiphon pisum (strain 5AT).